A 118-amino-acid polypeptide reads, in one-letter code: Basic phospholipase A2 PA-10A (118 aa).

Intrachain disulfides connect Cys-11/Cys-71, Cys-27/Cys-117, Cys-29/Cys-45, Cys-44/Cys-98, Cys-51/Cys-91, Cys-60/Cys-84, and Cys-78/Cys-89. Ca(2+) contacts are provided by Tyr-28, Gly-30, and Gly-32. The active site involves His-48. Position 49 (Asp-49) interacts with Ca(2+). The active site involves Asp-92.

The protein belongs to the phospholipase A2 family. Group I subfamily. D49 sub-subfamily. Ca(2+) is required as a cofactor. As to expression, expressed by the venom gland.

The protein resides in the secreted. The catalysed reaction is a 1,2-diacyl-sn-glycero-3-phosphocholine + H2O = a 1-acyl-sn-glycero-3-phosphocholine + a fatty acid + H(+). Its function is as follows. PLA2 catalyzes the calcium-dependent hydrolysis of the 2-acyl groups in 3-sn-phosphoglycerides. This Pseudechis australis (Mulga snake) protein is Basic phospholipase A2 PA-10A.